Consider the following 257-residue polypeptide: Serine/arginine-rich splicing factor 1 (257 aa).

At S2 the chain carries N-acetylserine. Residues 16–91 enclose the RRM 1 domain; the sequence is CRIYVGNLPP…YRLRVEFPRS (76 aa). The interval 88–116 is disordered; that stretch reads FPRSGRGTGRGGGGGGGGGAPRGRYGPPS. Positions 93-108 are enriched in gly residues; that stretch reads RGTGRGGGGGGGGGAP. The RRM 2 domain maps to 121–195; that stretch reads YRVIVSGLPP…ETAYIRVKVD (75 aa).

It localises to the cytoplasm. The protein localises to the nucleus speckle. Functionally, may play a role in preventing exon skipping, ensuring the accuracy of splicing and regulating alternative splicing. In Gallus gallus (Chicken), this protein is Serine/arginine-rich splicing factor 1 (SRSF1).